The sequence spans 338 residues: Peptidyl-prolyl cis-trans isomerase cyp11 (338 aa).

The PPIase cyclophilin-type domain maps to 7–172; sequence FFDIDVDGNR…HNVMIANCGE (166 aa). Residues 186–338 are disordered; the sequence is ASAVSDESED…RGRFKYRPTY (153 aa). Over residues 208–218 the composition is skewed to acidic residues; that stretch reads DDSSSDEDSEE. Residues 223–242 are compositionally biased toward basic residues; sequence RTKKKRSRKHSKKDKKKKKR. The segment covering 243 to 309 has biased composition (basic and acidic residues); the sequence is ESSNRKRSPE…PEKRSSERRV (67 aa). The segment covering 329–338 has biased composition (basic residues); that stretch reads RGRFKYRPTY.

Belongs to the cyclophilin-type PPIase family.

It catalyses the reaction [protein]-peptidylproline (omega=180) = [protein]-peptidylproline (omega=0). Its function is as follows. PPIases accelerate the folding of proteins. It catalyzes the cis-trans isomerization of proline imidic peptide bonds in oligopeptides. This Rhizopus delemar (strain RA 99-880 / ATCC MYA-4621 / FGSC 9543 / NRRL 43880) (Mucormycosis agent) protein is Peptidyl-prolyl cis-trans isomerase cyp11 (cyp11).